The chain runs to 185 residues: Elongation factor P (185 aa).

Belongs to the elongation factor P family.

The protein localises to the cytoplasm. It functions in the pathway protein biosynthesis; polypeptide chain elongation. Functionally, involved in peptide bond synthesis. Stimulates efficient translation and peptide-bond synthesis on native or reconstituted 70S ribosomes in vitro. Probably functions indirectly by altering the affinity of the ribosome for aminoacyl-tRNA, thus increasing their reactivity as acceptors for peptidyl transferase. The polypeptide is Elongation factor P (Mesomycoplasma hyopneumoniae (strain J / ATCC 25934 / NCTC 10110) (Mycoplasma hyopneumoniae)).